We begin with the raw amino-acid sequence, 445 residues long: Ubiquitin carboxyl-terminal hydrolase MINDY-3 (445 aa).

Cysteine 51 acts as the Nucleophile in catalysis. Serine 125 carries the phosphoserine modification. Catalysis depends on histidine 287, which acts as the Proton acceptor.

The protein belongs to the MINDY deubiquitinase family. FAM188 subfamily. Interacts with COPS5.

The protein localises to the nucleus. The enzyme catalyses Thiol-dependent hydrolysis of ester, thioester, amide, peptide and isopeptide bonds formed by the C-terminal Gly of ubiquitin (a 76-residue protein attached to proteins as an intracellular targeting signal).. In terms of biological role, hydrolase that can remove 'Lys-48'-linked conjugated ubiquitin from proteins. This is Ubiquitin carboxyl-terminal hydrolase MINDY-3 (MINDY3) from Bos taurus (Bovine).